We begin with the raw amino-acid sequence, 73 residues long: Protein kish (73 aa).

The N-terminal stretch at 1 to 21 (MTAIFNFESLLFVILLTICTC) is a signal peptide. Residues 22-52 (TYLHRQFPALLEKRKEGVTMVFWKCARIGER) lie on the Lumenal side of the membrane. Residues 53–73 (ASPYISLFCVFMALRFIFGSS) form a helical membrane-spanning segment.

This sequence belongs to the KISH family.

It localises to the golgi apparatus membrane. It is found in the endoplasmic reticulum membrane. In terms of biological role, involved in the early part of the secretory pathway. This Schizosaccharomyces pombe (strain 972 / ATCC 24843) (Fission yeast) protein is Protein kish (ksh1).